The primary structure comprises 113 residues: Probable leucocin-A immunity protein (113 aa).

It belongs to the immunity protein EntA family.

Its function is as follows. Imparts immunity to leucocin-A to naturally sensitive host strains. This chain is Probable leucocin-A immunity protein, found in Leuconostoc gelidum.